We begin with the raw amino-acid sequence, 198 residues long: Recombination protein RecR (198 aa).

A C4-type zinc finger spans residues 57–72 (CRQCRTLSEEELCPQC). One can recognise a Toprim domain in the interval 80-174 (SLLCVVEGPL…TLSRIAHGVP (95 aa)).

It belongs to the RecR family.

Its function is as follows. May play a role in DNA repair. It seems to be involved in an RecBC-independent recombinational process of DNA repair. It may act with RecF and RecO. This Pseudomonas aeruginosa (strain LESB58) protein is Recombination protein RecR.